The following is a 618-amino-acid chain: Dihydroxy-acid dehydratase 1 (618 aa).

Asp-81 provides a ligand contact to Mg(2+). Cys-122 is a binding site for [2Fe-2S] cluster. Mg(2+)-binding residues include Asp-123 and Lys-124. Lys-124 is subject to N6-carboxylysine. Cys-195 is a binding site for [2Fe-2S] cluster. Glu-491 is a binding site for Mg(2+). Ser-517 serves as the catalytic Proton acceptor.

It belongs to the IlvD/Edd family. Homodimer. [2Fe-2S] cluster is required as a cofactor. It depends on Mg(2+) as a cofactor.

The catalysed reaction is (2R)-2,3-dihydroxy-3-methylbutanoate = 3-methyl-2-oxobutanoate + H2O. It catalyses the reaction (2R,3R)-2,3-dihydroxy-3-methylpentanoate = (S)-3-methyl-2-oxopentanoate + H2O. It participates in amino-acid biosynthesis; L-isoleucine biosynthesis; L-isoleucine from 2-oxobutanoate: step 3/4. Its pathway is amino-acid biosynthesis; L-valine biosynthesis; L-valine from pyruvate: step 3/4. In terms of biological role, functions in the biosynthesis of branched-chain amino acids. Catalyzes the dehydration of (2R,3R)-2,3-dihydroxy-3-methylpentanoate (2,3-dihydroxy-3-methylvalerate) into 2-oxo-3-methylpentanoate (2-oxo-3-methylvalerate) and of (2R)-2,3-dihydroxy-3-methylbutanoate (2,3-dihydroxyisovalerate) into 2-oxo-3-methylbutanoate (2-oxoisovalerate), the penultimate precursor to L-isoleucine and L-valine, respectively. The polypeptide is Dihydroxy-acid dehydratase 1 (Pseudoalteromonas translucida (strain TAC 125)).